The chain runs to 355 residues: Guanine nucleotide-binding protein subunit alpha-14 (355 aa).

The G-alpha domain occupies 34 to 355; that stretch reads RELKLLLLGT…QLNLREFNLV (322 aa). The interval 37 to 50 is G1 motif; it reads KLLLLGTGESGKST. GTP-binding positions include 42–49, 176–182, 201–205, 270–273, and Ala327; these read GTGESGKS, LRVRVPT, DVGGQ, and NKKD. Residues Ser49 and Thr182 each coordinate Mg(2+). The interval 174–182 is G2 motif; the sequence is DVLRVRVPT. The tract at residues 197–206 is G3 motif; sequence FRMVDVGGQR. Residues 266 to 273 are G4 motif; it reads ILFLNKKD. The interval 325 to 330 is G5 motif; sequence TCATDT.

The protein belongs to the G-alpha family. G(q) subfamily. In terms of assembly, g proteins are composed of 3 units; alpha, beta and gamma. The alpha chain contains the guanine nucleotide binding site.

Functionally, guanine nucleotide-binding proteins (G proteins) are involved as modulators or transducers in various transmembrane signaling systems. The polypeptide is Guanine nucleotide-binding protein subunit alpha-14 (GNA14) (Bos taurus (Bovine)).